A 510-amino-acid chain; its full sequence is Citrate lyase alpha chain (510 aa).

In terms of assembly, oligomer with a subunit composition of (alpha,beta,gamma)6.

The protein resides in the cytoplasm. It catalyses the reaction citrate = oxaloacetate + acetate. The catalysed reaction is citrate + acetyl-CoA = (3S)-citryl-CoA + acetate. Its function is as follows. Represents a citrate:acetyl-ACP transferase. The chain is Citrate lyase alpha chain (citF) from Escherichia coli (strain K12).